A 625-amino-acid chain; its full sequence is Glucose dehydrogenase [FAD, quinone] (625 aa).

Positions methionine 1–serine 42 are cleaved as a signal peptide. An FAD-binding site is contributed by aspartate 66–glutamate 95. The active-site Proton acceptor is the histidine 544. Position 613 (selenocysteine 613) is a non-standard amino acid, selenocysteine.

It belongs to the GMC oxidoreductase family. The cofactor is FAD.

It localises to the secreted. It catalyses the reaction a quinone + D-glucose = D-glucono-1,5-lactone + a quinol. In terms of biological role, essential for cuticular modification during development. In Drosophila melanogaster (Fruit fly), this protein is Glucose dehydrogenase [FAD, quinone] (Gld).